A 236-amino-acid polypeptide reads, in one-letter code: Orotidine 5'-phosphate decarboxylase (236 aa).

Substrate is bound by residues D17, K39, 66-75 (DLKFYDIPNT), T125, R187, Q196, G216, and R217. Catalysis depends on K68, which acts as the Proton donor.

This sequence belongs to the OMP decarboxylase family. Type 1 subfamily. In terms of assembly, homodimer.

The enzyme catalyses orotidine 5'-phosphate + H(+) = UMP + CO2. It functions in the pathway pyrimidine metabolism; UMP biosynthesis via de novo pathway; UMP from orotate: step 2/2. Its function is as follows. Catalyzes the decarboxylation of orotidine 5'-monophosphate (OMP) to uridine 5'-monophosphate (UMP). In Buchnera aphidicola subsp. Baizongia pistaciae (strain Bp), this protein is Orotidine 5'-phosphate decarboxylase.